A 112-amino-acid polypeptide reads, in one-letter code: MDLLFFDIGATLYGTDASQVLRIDRALPEDLTLAELGLPHRGNRAIVFDTPEGEAHLKVDAVHGVRSIPVNSLRRMPPTAGAAAYAVGVCLEEARTVLLIDLVETARTQGRH.

Its function is as follows. Necessary for proper aggregation of cells to form fruiting bodies. FRZ genes define a system of signal transduction analogous to the enterobacterial chemotaxis systems. This Myxococcus xanthus protein is Frizzy aggregation protein FrzB (frzB).